A 418-amino-acid chain; its full sequence is L-rhamnose isomerase (418 aa).

The Mn(2+) site is built by histidine 262, aspartate 294, and aspartate 296.

It belongs to the rhamnose isomerase family. In terms of assembly, homotetramer. Mn(2+) serves as cofactor.

Its subcellular location is the cytoplasm. The enzyme catalyses L-rhamnopyranose = L-rhamnulose. It functions in the pathway carbohydrate degradation; L-rhamnose degradation; glycerone phosphate from L-rhamnose: step 1/3. Its function is as follows. Catalyzes the interconversion of L-rhamnose and L-rhamnulose. This Cronobacter sakazakii (strain ATCC BAA-894) (Enterobacter sakazakii) protein is L-rhamnose isomerase.